We begin with the raw amino-acid sequence, 386 residues long: Acetylornithine aminotransferase (386 aa).

Residues 96-97 (GA) and Phe123 contribute to the pyridoxal 5'-phosphate site. Arg126 serves as a coordination point for N(2)-acetyl-L-ornithine. 208 to 211 (DEVQ) contacts pyridoxal 5'-phosphate. An N6-(pyridoxal phosphate)lysine modification is found at Lys237. Ser265 serves as a coordination point for N(2)-acetyl-L-ornithine. Thr266 lines the pyridoxal 5'-phosphate pocket.

Belongs to the class-III pyridoxal-phosphate-dependent aminotransferase family. ArgD subfamily. Homodimer. Requires pyridoxal 5'-phosphate as cofactor.

Its subcellular location is the cytoplasm. It carries out the reaction N(2)-acetyl-L-ornithine + 2-oxoglutarate = N-acetyl-L-glutamate 5-semialdehyde + L-glutamate. It participates in amino-acid biosynthesis; L-arginine biosynthesis; N(2)-acetyl-L-ornithine from L-glutamate: step 4/4. This Bacillus cereus (strain ATCC 14579 / DSM 31 / CCUG 7414 / JCM 2152 / NBRC 15305 / NCIMB 9373 / NCTC 2599 / NRRL B-3711) protein is Acetylornithine aminotransferase.